Consider the following 437-residue polypeptide: Probable eukaryotic translation initiation factor 5-2 (437 aa).

29–36 is a binding site for GTP; sequence GKGNGIKT. Basic and acidic residues-rich tracts occupy residues 148–179 and 191–212; these read EQKKVSKDKKAMRKAEKERLKEGELADEEQRK and KDSKTSKNHSSDEDISPKHDEN. 2 disordered regions span residues 148 to 231 and 262 to 284; these read EQKK…WQTD and EKKAPKSKSNGNVVKTENPPPQE. Serine 201 carries the post-translational modification Phosphoserine; by CK2. Positions 213–226 are enriched in acidic residues; it reads ALEVDEDEDDDDGV. Threonine 230 carries the phosphothreonine; by CK2 modification. The W2 domain occupies 278–436; sequence ENPPPQEKNL…QSAESESEEE (159 aa). Phosphoserine; by CK2 occurs at positions 428, 431, and 433.

The protein belongs to the eIF-2-beta/eIF-5 family. Post-translationally, phosphorylated at Ser-201, Thr-230, Ser-428, Ser-431, and Ser-433 by CK2.

In terms of biological role, catalyzes the hydrolysis of GTP bound to the 40S ribosomal initiation complex (40S.mRNA.Met-tRNA[F].eIF-2.GTP) with the subsequent joining of a 60S ribosomal subunit resulting in the release of eIF-2 and the guanine nucleotide. The subsequent joining of a 60S ribosomal subunit results in the formation of a functional 80S initiation complex (80S.mRNA.Met-tRNA[F]). The protein is Probable eukaryotic translation initiation factor 5-2 of Arabidopsis thaliana (Mouse-ear cress).